Here is a 249-residue protein sequence, read N- to C-terminus: 5'-nucleotidase SurE (249 aa).

A divalent metal cation is bound by residues Asp-9, Asp-10, Ser-40, and Asn-92.

The protein belongs to the SurE nucleotidase family. The cofactor is a divalent metal cation.

The protein localises to the cytoplasm. It carries out the reaction a ribonucleoside 5'-phosphate + H2O = a ribonucleoside + phosphate. In terms of biological role, nucleotidase that shows phosphatase activity on nucleoside 5'-monophosphates. The chain is 5'-nucleotidase SurE from Shewanella sp. (strain MR-4).